The chain runs to 158 residues: NAD(P)H-quinone oxidoreductase subunit J, chloroplastic (158 aa).

It belongs to the complex I 30 kDa subunit family. In terms of assembly, NDH is composed of at least 16 different subunits, 5 of which are encoded in the nucleus.

Its subcellular location is the plastid. It localises to the chloroplast thylakoid membrane. The enzyme catalyses a plastoquinone + NADH + (n+1) H(+)(in) = a plastoquinol + NAD(+) + n H(+)(out). It carries out the reaction a plastoquinone + NADPH + (n+1) H(+)(in) = a plastoquinol + NADP(+) + n H(+)(out). NDH shuttles electrons from NAD(P)H:plastoquinone, via FMN and iron-sulfur (Fe-S) centers, to quinones in the photosynthetic chain and possibly in a chloroplast respiratory chain. The immediate electron acceptor for the enzyme in this species is believed to be plastoquinone. Couples the redox reaction to proton translocation, and thus conserves the redox energy in a proton gradient. This chain is NAD(P)H-quinone oxidoreductase subunit J, chloroplastic, found in Panax ginseng (Korean ginseng).